The chain runs to 166 residues: Transcriptional repressor NrdR (166 aa).

A zinc finger lies at 3–34; sequence CPFCRNPDSRVVDSRMADDGSSIRRRRQCPEC. Residues 46–136 enclose the ATP-cone domain; it reads LSVIKRSGVG…VYQAFESLED (91 aa).

Belongs to the NrdR family. Zn(2+) serves as cofactor.

Negatively regulates transcription of bacterial ribonucleotide reductase nrd genes and operons by binding to NrdR-boxes. The protein is Transcriptional repressor NrdR of Paenarthrobacter aurescens (strain TC1).